The following is a 435-amino-acid chain: MHDIRVIRDNPAAFDAGLRRRGLEPLAAELVALDDARKAAISAAQVAQERRNALSKEIGAAKKARDEERARALMAEVARLKEQAPGLDAAADAAARALDARLAAIPNTPGPEVPEGRDEHDNVELRRFEGRGRAESGRQHFELGEAAGLMDFEAAARLSGSRFVVLKGRLARLERALGQFMLDLHTAEHGYTEVAPPLLVRDEAMFGTAQLPKFRDDQFAAQPGAVEPGAPGRWLIPTAEVPLTNLVRESILSEDELPLRFTALTPCFRAEAGAAGRDTRGMLRQHQFTKVELVSITAPEQSAEEHERMLACAEAVLRRLDLPYRVMTLCTGDMGFASQKTYDIEVWLPGQGTYREISSCSVCGDFQARRMEARFRRREDRGLGYVHSLNGSGVAVGRALIAVMENYQNPDGSVTVPSALAPYMGGVTRIEGPHA.

238 to 240 provides a ligand contact to L-serine; sequence TAE. 269 to 271 is an ATP binding site; it reads RAE. E292 lines the L-serine pocket. 356–359 is a binding site for ATP; sequence EISS. An L-serine-binding site is contributed by S392.

Belongs to the class-II aminoacyl-tRNA synthetase family. Type-1 seryl-tRNA synthetase subfamily. As to quaternary structure, homodimer. The tRNA molecule binds across the dimer.

It localises to the cytoplasm. The enzyme catalyses tRNA(Ser) + L-serine + ATP = L-seryl-tRNA(Ser) + AMP + diphosphate + H(+). The catalysed reaction is tRNA(Sec) + L-serine + ATP = L-seryl-tRNA(Sec) + AMP + diphosphate + H(+). It participates in aminoacyl-tRNA biosynthesis; selenocysteinyl-tRNA(Sec) biosynthesis; L-seryl-tRNA(Sec) from L-serine and tRNA(Sec): step 1/1. Catalyzes the attachment of serine to tRNA(Ser). Is also able to aminoacylate tRNA(Sec) with serine, to form the misacylated tRNA L-seryl-tRNA(Sec), which will be further converted into selenocysteinyl-tRNA(Sec). The chain is Serine--tRNA ligase from Methylobacterium sp. (strain 4-46).